Consider the following 162-residue polypeptide: Endoribonuclease YbeY (162 aa).

Histidine 128, histidine 132, and histidine 138 together coordinate Zn(2+).

Belongs to the endoribonuclease YbeY family. The cofactor is Zn(2+).

The protein localises to the cytoplasm. In terms of biological role, single strand-specific metallo-endoribonuclease involved in late-stage 70S ribosome quality control and in maturation of the 3' terminus of the 16S rRNA. The polypeptide is Endoribonuclease YbeY (Lactococcus lactis subsp. cremoris (strain MG1363)).